The sequence spans 890 residues: Wolframin (890 aa).

At Met-1 the chain carries N-acetylmethionine. The span at 1–20 shows a compositional bias: pro residues; the sequence is MNSGTPPPSPSGPPPPPAPQ. Residues 1–83 are disordered; that stretch reads MNSGTPPPSP…ETDRAGPMKA (83 aa). Residues 1–323 are interaction with ATP6V1A; that stretch reads MNSGTPPPSP…MHWLSTIVPT (323 aa). Residue Thr-30 is modified to Phosphothreonine. Ser-32 carries the phosphoserine modification. Residues 50–67 are compositionally biased toward low complexity; that stretch reads PSAGRSAGEAAAPEPRAP. The span at 71 to 83 shows a compositional bias: basic and acidic residues; it reads SREETDRAGPMKA. Residue Ser-158 is modified to Phosphoserine. Residues 208–227 are disordered; the sequence is VNEQDGGAQPGPVPKSLQKQ. 10 consecutive transmembrane segments (helical) span residues 314–334, 340–360, 402–422, 427–447, 465–485, 496–516, 529–549, 563–583, 589–609, and 632–652; these read MHWLSTIVPTHHINALIFFFI, IDFFAFFIPLVVFYLSFVSMV, NHLEPYIHFLLSVVFVIFSFP, DCIPCSELAVISTFFTVTSYM, VAAGLLSLLPTVPVDWRFLKV, GHFIILNVSLPCLLYVYLFYL, TYCYLVPYLVCFMWCELSVVI, IGYFLFLFALPILVAGLALMG, RWFLSLDLTKIMVTTVICGVP, and SSMVKLILVWLTAILLFCWFY. Topologically, residues 653 to 869 are lumenal; the sequence is VYRSEGMKVY…HVKIEQDWRS (217 aa). 2 N-linked (GlcNAc...) asparagine glycosylation sites follow: Asn-663 and Asn-748. The chain crosses the membrane as a helical span at residues 870 to 890; the sequence is TVHGALKFAFDFFFFPFLSAA.

Interacts with ATP6V1A. Highly expressed in the developing lens.

The protein resides in the endoplasmic reticulum membrane. It localises to the cytoplasmic vesicle. It is found in the secretory vesicle. Its function is as follows. Participates in the regulation of cellular Ca(2+) homeostasis, at least partly, by modulating the filling state of the endoplasmic reticulum Ca(2+) store. Negatively regulates the ER stress response and positively regulates the stability of V-ATPase subunits ATP6V1A and ATP1B1 by preventing their degradation through an unknown proteasome-independent mechanism. The protein is Wolframin (Wfs1) of Mus musculus (Mouse).